We begin with the raw amino-acid sequence, 492 residues long: Probable glycine dehydrogenase (decarboxylating) subunit 2 (492 aa).

An N6-(pyridoxal phosphate)lysine modification is found at Lys274.

It belongs to the GcvP family. C-terminal subunit subfamily. In terms of assembly, the glycine cleavage system is composed of four proteins: P, T, L and H. In this organism, the P 'protein' is a heterodimer of two subunits. Pyridoxal 5'-phosphate serves as cofactor.

The enzyme catalyses N(6)-[(R)-lipoyl]-L-lysyl-[glycine-cleavage complex H protein] + glycine + H(+) = N(6)-[(R)-S(8)-aminomethyldihydrolipoyl]-L-lysyl-[glycine-cleavage complex H protein] + CO2. The glycine cleavage system catalyzes the degradation of glycine. The P protein binds the alpha-amino group of glycine through its pyridoxal phosphate cofactor; CO(2) is released and the remaining methylamine moiety is then transferred to the lipoamide cofactor of the H protein. The chain is Probable glycine dehydrogenase (decarboxylating) subunit 2 from Staphylococcus saprophyticus subsp. saprophyticus (strain ATCC 15305 / DSM 20229 / NCIMB 8711 / NCTC 7292 / S-41).